Here is a 311-residue protein sequence, read N- to C-terminus: Peptide methionine sulfoxide reductase MsrA/MsrB (311 aa).

The segment at 1-155 (MAEIYLAGGC…PGGYCHINVN (155 aa)) is peptide methionine sulfoxide reductase A. The active site involves Cys10. Residues 172 to 295 (DAELKEQLTQ…NSAALRFIPK (124 aa)) form the MsrB domain. The Nucleophile role is filled by Cys284.

In the N-terminal section; belongs to the MsrA Met sulfoxide reductase family. It in the C-terminal section; belongs to the MsrB Met sulfoxide reductase family.

It catalyses the reaction L-methionyl-[protein] + [thioredoxin]-disulfide + H2O = L-methionyl-(S)-S-oxide-[protein] + [thioredoxin]-dithiol. The enzyme catalyses [thioredoxin]-disulfide + L-methionine + H2O = L-methionine (S)-S-oxide + [thioredoxin]-dithiol. It carries out the reaction L-methionyl-[protein] + [thioredoxin]-disulfide + H2O = L-methionyl-(R)-S-oxide-[protein] + [thioredoxin]-dithiol. Its function is as follows. Has an important function as a repair enzyme for proteins that have been inactivated by oxidation. Catalyzes the reversible oxidation-reduction of methionine sulfoxide in proteins to methionine. Involved in protection against oxidative stress when the bacterium enters the host bloodstream and required for maximal growth under aerobic and anaerobic conditions. This Streptococcus gordonii (strain Challis / ATCC 35105 / BCRC 15272 / CH1 / DL1 / V288) protein is Peptide methionine sulfoxide reductase MsrA/MsrB (msrAB).